A 298-amino-acid polypeptide reads, in one-letter code: Bifunctional protein FolD (298 aa).

NADP(+) contacts are provided by residues 165–167 (GRG), S194, and I235.

It belongs to the tetrahydrofolate dehydrogenase/cyclohydrolase family. In terms of assembly, homodimer.

It carries out the reaction (6R)-5,10-methylene-5,6,7,8-tetrahydrofolate + NADP(+) = (6R)-5,10-methenyltetrahydrofolate + NADPH. The catalysed reaction is (6R)-5,10-methenyltetrahydrofolate + H2O = (6R)-10-formyltetrahydrofolate + H(+). It functions in the pathway one-carbon metabolism; tetrahydrofolate interconversion. Its function is as follows. Catalyzes the oxidation of 5,10-methylenetetrahydrofolate to 5,10-methenyltetrahydrofolate and then the hydrolysis of 5,10-methenyltetrahydrofolate to 10-formyltetrahydrofolate. This Amoebophilus asiaticus (strain 5a2) protein is Bifunctional protein FolD.